The primary structure comprises 78 residues: Large ribosomal subunit protein eL20 (78 aa).

It belongs to the eukaryotic ribosomal protein eL20 family. As to quaternary structure, part of the 50S ribosomal subunit. Binds 23S rRNA.

The polypeptide is Large ribosomal subunit protein eL20 (Pyrobaculum calidifontis (strain DSM 21063 / JCM 11548 / VA1)).